The chain runs to 320 residues: Malate dehydrogenase (320 aa).

NAD(+)-binding positions include 10 to 15 (GSGMIG) and Asp-34. Residues Arg-83 and Arg-89 each coordinate substrate. NAD(+) is bound by residues Asn-96 and 119–121 (ITN). The substrate site is built by Asn-121 and Arg-152. His-176 serves as the catalytic Proton acceptor.

The protein belongs to the LDH/MDH superfamily. MDH type 3 family.

It carries out the reaction (S)-malate + NAD(+) = oxaloacetate + NADH + H(+). In terms of biological role, catalyzes the reversible oxidation of malate to oxaloacetate. The polypeptide is Malate dehydrogenase (Brucella abortus (strain S19)).